The sequence spans 500 residues: 4-aminobutyrate aminotransferase, mitochondrial (500 aa).

The transit peptide at 1-28 (MASMLVAQRLACSFQHSYRLLVPGSRHI) directs the protein to the mitochondrion. Residue C163 coordinates [2Fe-2S] cluster. Pyridoxal 5'-phosphate is bound at residue 164–165 (GS). A [2Fe-2S] cluster-binding site is contributed by C166. Position 220 (R220) interacts with substrate. At K231 the chain carries N6-succinyllysine. N6-acetyllysine; alternate is present on K252. N6-succinyllysine; alternate is present on K252. An N6-acetyllysine mark is found at K279 and K318. At K357 the chain carries N6-(pyridoxal phosphate)lysine. T381 provides a ligand contact to pyridoxal 5'-phosphate. K413 is subject to N6-acetyllysine; alternate. K413 is subject to N6-succinyllysine; alternate. N6-acetyllysine occurs at positions 452 and 470.

The protein belongs to the class-III pyridoxal-phosphate-dependent aminotransferase family. Homodimer; disulfide-linked. Pyridoxal 5'-phosphate serves as cofactor. Requires [2Fe-2S] cluster as cofactor.

The protein resides in the mitochondrion matrix. It catalyses the reaction 4-aminobutanoate + 2-oxoglutarate = succinate semialdehyde + L-glutamate. The enzyme catalyses (S)-3-amino-2-methylpropanoate + 2-oxoglutarate = 2-methyl-3-oxopropanoate + L-glutamate. Functionally, catalyzes the conversion of gamma-aminobutyrate and L-beta-aminoisobutyrate to succinate semialdehyde and methylmalonate semialdehyde, respectively. Can also convert delta-aminovalerate and beta-alanine. The sequence is that of 4-aminobutyrate aminotransferase, mitochondrial (ABAT) from Bos taurus (Bovine).